A 142-amino-acid chain; its full sequence is UPF0336 protein PPA1896 (142 aa).

The protein belongs to the UPF0336 family.

In Cutibacterium acnes (strain DSM 16379 / KPA171202) (Propionibacterium acnes), this protein is UPF0336 protein PPA1896.